A 201-amino-acid polypeptide reads, in one-letter code: Recombination protein RecR (201 aa).

The segment at 58 to 73 (CGRCGALTDVDPCGIC) adopts a C4-type zinc-finger fold. Positions 81-178 (ETLCLVSEWD…RVTRLAQGIP (98 aa)) constitute a Toprim domain.

It belongs to the RecR family.

Its function is as follows. May play a role in DNA repair. It seems to be involved in an RecBC-independent recombinational process of DNA repair. It may act with RecF and RecO. This Nitratidesulfovibrio vulgaris (strain DSM 19637 / Miyazaki F) (Desulfovibrio vulgaris) protein is Recombination protein RecR.